Reading from the N-terminus, the 3603-residue chain is Plipastatin synthase subunit D (3603 aa).

The interval 7 to 306 (IQDIYPLSYM…NTMPVRVQGA (300 aa)) is condensation 1. The tract at residues 7-1043 (IQDIYPLSYM…ALIIREAEQN (1037 aa)) is domain 1 (proline-activating). An adenylation 1 region spans residues 490–889 (TYRELNKAAN…NHPDISEAAI (400 aa)). One can recognise a Carrier 1 domain in the interval 966 to 1041 (APRNLLEAKL…GLALIIREAE (76 aa)). O-(pantetheine 4'-phosphoryl)serine is present on Ser-1001. The interval 1053-1334 (KRDTYPVSSA…NTLALRTRPA (282 aa)) is condensation 2. Positions 1053-2069 (KRDTYPVSSA…TVEGLATVIR (1017 aa)) are domain 2 (glutamine-activating). Residues 1521–1924 (TYKELNEQAN…SIEGVREAAV (404 aa)) form an adenylation 2 region. The Carrier 2 domain occupies 1997–2072 (APRNVTEMKL…GLATVIREGT (76 aa)). Position 2032 is an O-(pantetheine 4'-phosphoryl)serine (Ser-2032). The interval 2084–2374 (KQETYPVSSA…NTLALRTRPE (291 aa)) is condensation 3. The tract at residues 2084 to 3596 (KQETYPVSSA…ELTEDALQEI (1513 aa)) is domain 3 (proline-activating). Positions 2560 to 2956 (TYQELDEWSN…CIKGVKDAAV (397 aa)) are adenylation 3. A Carrier 3 domain is found at 3034–3108 (PPSSKMEQIL…ELAAYIRDSD (75 aa)). An O-(pantetheine 4'-phosphoryl)serine modification is found at Ser-3069. Residues 3116 to 3596 (VEGDVQWSPV…ELTEDALQEI (481 aa)) form an epimerization region.

The protein belongs to the ATP-dependent AMP-binding enzyme family. The cofactor is pantetheine 4'-phosphate.

Its function is as follows. This protein is a multifunctional enzyme, able to activate and polymerize the amino acids Pro, Gln and Tyr as part of the biosynthesis of the lipopeptide antibiotic plipastatin. The Tyr residue is further epimerized to the D-isomer form. The activation sites for these amino acids consist of individual domains. This is Plipastatin synthase subunit D (ppsD) from Bacillus subtilis (strain 168).